A 173-amino-acid chain; its full sequence is T-cell receptor beta-2 chain C region (173 aa).

The segment at 1 to 146 is c region; sequence EDLRNVTPPK…GVLSATILYE (146 aa). 2 N-linked (GlcNAc...) asparagine glycosylation sites follow: Asn67 and Asn116. A helical transmembrane segment spans residues 147-168; it reads ILLGKATLYAVLVSGLVLMAMV. The Cytoplasmic segment spans residues 169–173; that stretch reads KKKNS.

The protein localises to the membrane. The protein is T-cell receptor beta-2 chain C region of Mus musculus (Mouse).